Consider the following 156-residue polypeptide: Small ribosomal subunit protein uS7c (156 aa).

The protein belongs to the universal ribosomal protein uS7 family. Part of the 30S ribosomal subunit.

The protein localises to the plastid. Its subcellular location is the chloroplast. Its function is as follows. One of the primary rRNA binding proteins, it binds directly to 16S rRNA where it nucleates assembly of the head domain of the 30S subunit. The sequence is that of Small ribosomal subunit protein uS7c (rps7) from Chlorella vulgaris (Green alga).